A 440-amino-acid chain; its full sequence is tRNA(Ile)-lysidine synthase (440 aa).

Position 31–36 (31–36) interacts with ATP; sequence SGGADS.

This sequence belongs to the tRNA(Ile)-lysidine synthase family.

It localises to the cytoplasm. It catalyses the reaction cytidine(34) in tRNA(Ile2) + L-lysine + ATP = lysidine(34) in tRNA(Ile2) + AMP + diphosphate + H(+). Functionally, ligates lysine onto the cytidine present at position 34 of the AUA codon-specific tRNA(Ile) that contains the anticodon CAU, in an ATP-dependent manner. Cytidine is converted to lysidine, thus changing the amino acid specificity of the tRNA from methionine to isoleucine. The protein is tRNA(Ile)-lysidine synthase of Borreliella afzelii (strain PKo) (Borrelia afzelii).